Here is a 397-residue protein sequence, read N- to C-terminus: Golgi-associated RAB2 interactor protein 2 (397 aa).

Disordered regions lie at residues 1-24 (MKKS…PDSK) and 342-397 (QTTL…KLLN). 3 stretches are compositionally biased toward basic and acidic residues: residues 10–24 (TRID…PDSK), 353–369 (EKSK…RTMD), and 376–397 (KAEE…KLLN).

This sequence belongs to the GARIN family. As to quaternary structure, interacts with CALM1.

The protein resides in the cell projection. It localises to the cilium. The protein localises to the flagellum. Seems to play a role in sperm motility. The polypeptide is Golgi-associated RAB2 interactor protein 2 (GARIN2) (Bos taurus (Bovine)).